Consider the following 310-residue polypeptide: Porphobilinogen deaminase (310 aa).

Cysteine 242 carries the post-translational modification S-(dipyrrolylmethanemethyl)cysteine.

Belongs to the HMBS family. Monomer. Dipyrromethane is required as a cofactor.

The enzyme catalyses 4 porphobilinogen + H2O = hydroxymethylbilane + 4 NH4(+). It participates in porphyrin-containing compound metabolism; protoporphyrin-IX biosynthesis; coproporphyrinogen-III from 5-aminolevulinate: step 2/4. In terms of biological role, tetrapolymerization of the monopyrrole PBG into the hydroxymethylbilane pre-uroporphyrinogen in several discrete steps. The chain is Porphobilinogen deaminase from Shewanella halifaxensis (strain HAW-EB4).